The sequence spans 224 residues: 7-cyano-7-deazaguanine synthase (224 aa).

An ATP-binding site is contributed by 10–20; sequence FSGGQDSTTCL. Positions 193, 201, 204, and 207 each coordinate Zn(2+).

The protein belongs to the QueC family. Zn(2+) serves as cofactor.

It catalyses the reaction 7-carboxy-7-deazaguanine + NH4(+) + ATP = 7-cyano-7-deazaguanine + ADP + phosphate + H2O + H(+). It functions in the pathway purine metabolism; 7-cyano-7-deazaguanine biosynthesis. Catalyzes the ATP-dependent conversion of 7-carboxy-7-deazaguanine (CDG) to 7-cyano-7-deazaguanine (preQ(0)). This chain is 7-cyano-7-deazaguanine synthase, found in Neisseria gonorrhoeae (strain ATCC 700825 / FA 1090).